A 104-amino-acid polypeptide reads, in one-letter code: Snakin-2 (104 aa).

Residues 1 to 23 (MAISKALFASLLLSLLLLEQVQS) form the signal peptide. Positions 24 to 38 (IQTDQVTSNAISEAA) are cleaved as a propeptide — removed in mature form.

The protein belongs to the GASA family. Six disulfide bonds may be present. As to expression, expressed in tubers, stems, flowers, shoot apex and leaves, but not in roots or stolons.

The protein localises to the secreted. It is found in the cell wall. Has an antimicrobial activity. Causes a rapid aggregation of both Gram-positive and Gram-negative bacteria, but the antimicrobial activity is not correlated with the capacity to aggregate bacteria. The chain is Snakin-2 (SN2) from Solanum tuberosum (Potato).